Here is a 171-residue protein sequence, read N- to C-terminus: Photosystem I assembly protein Ycf3 (171 aa).

3 TPR repeats span residues 35–68, 72–105, and 120–153; these read AFTY…EVDA, SYIL…NPYL, and GEQA…APTN.

The protein belongs to the Ycf3 family.

The protein localises to the plastid. It localises to the chloroplast thylakoid membrane. Functionally, essential for the assembly of the photosystem I (PSI) complex. May act as a chaperone-like factor to guide the assembly of the PSI subunits. This is Photosystem I assembly protein Ycf3 from Nephroselmis olivacea (Green alga).